The following is a 310-amino-acid chain: Lipoyl synthase (310 aa).

[4Fe-4S] cluster is bound by residues Cys-41, Cys-46, Cys-52, Cys-68, Cys-72, Cys-75, and Ser-281. A Radical SAM core domain is found at 54 to 270 (GERRTATFMI…RKVAMEKGFK (217 aa)). Residues 285–310 (DEQVNEAAKERQRIGDEKLEAAKNEA) form a disordered region.

It belongs to the radical SAM superfamily. Lipoyl synthase family. The cofactor is [4Fe-4S] cluster.

Its subcellular location is the cytoplasm. The enzyme catalyses [[Fe-S] cluster scaffold protein carrying a second [4Fe-4S](2+) cluster] + N(6)-octanoyl-L-lysyl-[protein] + 2 oxidized [2Fe-2S]-[ferredoxin] + 2 S-adenosyl-L-methionine + 4 H(+) = [[Fe-S] cluster scaffold protein] + N(6)-[(R)-dihydrolipoyl]-L-lysyl-[protein] + 4 Fe(3+) + 2 hydrogen sulfide + 2 5'-deoxyadenosine + 2 L-methionine + 2 reduced [2Fe-2S]-[ferredoxin]. Its pathway is protein modification; protein lipoylation via endogenous pathway; protein N(6)-(lipoyl)lysine from octanoyl-[acyl-carrier-protein]. Functionally, catalyzes the radical-mediated insertion of two sulfur atoms into the C-6 and C-8 positions of the octanoyl moiety bound to the lipoyl domains of lipoate-dependent enzymes, thereby converting the octanoylated domains into lipoylated derivatives. This Staphylococcus carnosus (strain TM300) protein is Lipoyl synthase.